Reading from the N-terminus, the 385-residue chain is 8-amino-7-oxononanoate synthase (385 aa).

Arginine 21 provides a ligand contact to substrate. 108–109 (GF) provides a ligand contact to pyridoxal 5'-phosphate. Histidine 133 is a binding site for substrate. The pyridoxal 5'-phosphate site is built by serine 179, histidine 207, and threonine 233. Lysine 236 is subject to N6-(pyridoxal phosphate)lysine. Threonine 352 contributes to the substrate binding site.

It belongs to the class-II pyridoxal-phosphate-dependent aminotransferase family. BioF subfamily. As to quaternary structure, homodimer. The cofactor is pyridoxal 5'-phosphate.

It catalyses the reaction 6-carboxyhexanoyl-[ACP] + L-alanine + H(+) = (8S)-8-amino-7-oxononanoate + holo-[ACP] + CO2. It participates in cofactor biosynthesis; biotin biosynthesis. Catalyzes the decarboxylative condensation of pimeloyl-[acyl-carrier protein] and L-alanine to produce 8-amino-7-oxononanoate (AON), [acyl-carrier protein], and carbon dioxide. The polypeptide is 8-amino-7-oxononanoate synthase (Salmonella paratyphi A (strain ATCC 9150 / SARB42)).